Reading from the N-terminus, the 458-residue chain is E3 ubiquitin-protein ligase RNF25 (458 aa).

Positions S18–N128 constitute an RWD domain. C135, C138, C153, H155, C161, C197, and C200 together coordinate Zn(2+). An RING-type zinc finger spans residues C135–R201. 2 disordered regions span residues P267–T299 and K317–S458. 2 stretches are compositionally biased toward polar residues: residues G282–T299 and L362–Q372. 2 stretches are compositionally biased toward basic and acidic residues: residues P377 to S388 and R412 to K423. The segment covering P432 to P443 has biased composition (low complexity).

The protein belongs to the RNF25 family. As to quaternary structure, interacts with UBE2D2, and may also interact with UBE2E1 and UBE2E3. Interacts with RELA/p65. In terms of processing, ubiquitinated; autoubiquitinated.

The protein resides in the cytoplasm. It carries out the reaction S-ubiquitinyl-[E2 ubiquitin-conjugating enzyme]-L-cysteine + [acceptor protein]-L-lysine = [E2 ubiquitin-conjugating enzyme]-L-cysteine + N(6)-ubiquitinyl-[acceptor protein]-L-lysine.. It participates in protein modification; protein ubiquitination. Its function is as follows. E3 ubiquitin-protein ligase that plays a key role in the RNF14-RNF25 translation quality control pathway, a pathway that takes place when a ribosome has stalled during translation, and which promotes ubiquitination and degradation of translation factors on stalled ribosomes. Catalyzes ubiquitination of RPS27A in response to ribosome collisions, promoting activation of RNF14. RNF25 catalyzes ubiquitination of other ribosomal proteins on stalled ribosomes, such as RPL0, RPL1, RPL12, RPS13 and RPS17. Also involved in ubiquitination and degradation of stalled ETF1/eRF1. Independently of its function in the response to stalled ribosomes, mediates ubiquitination and subsequent proteasomal degradation of NKD2. May also stimulate transcription mediated by NF-kappa-B via its interaction with RELA/p65. The sequence is that of E3 ubiquitin-protein ligase RNF25 (RNF25) from Bos taurus (Bovine).